The primary structure comprises 245 residues: MSQSTSVLRRNGFTFKQFFVAHDRCAMKVGTDGILLGAWAPVAGVKRCLDIGAGSGLLALMLAQRTDDSVMIDAVELESEAAAQAQENINQSPWAERINVHTADIQQWITQQTVRFDLIISNPPYYQQGVECSTPQREQARYTTTLDHPSLLTCAAECITEEGFFCVVLPEQIGNGFTELALSMGWHLRLRTDVAENEARLPHRVLLAFSPQAGECFSDRLVIRGPDQNYSEAYTALTQAFYLFM.

The protein belongs to the methyltransferase superfamily. tRNA (adenine-N(6)-)-methyltransferase family.

The protein resides in the cytoplasm. It catalyses the reaction adenosine(37) in tRNA1(Val) + S-adenosyl-L-methionine = N(6)-methyladenosine(37) in tRNA1(Val) + S-adenosyl-L-homocysteine + H(+). Functionally, specifically methylates the adenine in position 37 of tRNA(1)(Val) (anticodon cmo5UAC). The protein is tRNA1(Val) (adenine(37)-N6)-methyltransferase (yfiC) of Escherichia coli (strain K12).